Here is a 177-residue protein sequence, read N- to C-terminus: MTEMVPAWVEGRLMPVEKLEAHQRGLRHMAISVFVMAGEAVLIQRRAAGKYHTPGLWANTCCTHPRWGEEAADCAVRRLREELGITGLVTVFADRVEYRADVGNGLIEHEVVDIFVAEAPSDLPVNPDPEEVWETRWVDLTDLAREVKEHPERFTPWLRIYLAEHMERIFGKLRVVQ.

Positions 22 and 28 each coordinate Mn(2+). A Nudix hydrolase domain is found at 26 to 160 (LRHMAISVFV…PERFTPWLRI (135 aa)). The active site involves Cys62. His64 lines the Mn(2+) pocket. Mg(2+) is bound at residue Glu82. Mn(2+) is bound by residues Glu108 and Glu110. The active site involves Glu110.

This sequence belongs to the IPP isomerase type 1 family. The cofactor is Mg(2+). Requires Mn(2+) as cofactor.

It localises to the cytoplasm. It carries out the reaction isopentenyl diphosphate = dimethylallyl diphosphate. It functions in the pathway isoprenoid biosynthesis; dimethylallyl diphosphate biosynthesis; dimethylallyl diphosphate from isopentenyl diphosphate: step 1/1. It participates in porphyrin-containing compound metabolism; chlorophyll biosynthesis. Catalyzes the 1,3-allylic rearrangement of the homoallylic substrate isopentenyl (IPP) to its highly electrophilic allylic isomer, dimethylallyl diphosphate (DMAPP). This is Isopentenyl-diphosphate Delta-isomerase from Cereibacter sphaeroides (strain KD131 / KCTC 12085) (Rhodobacter sphaeroides).